We begin with the raw amino-acid sequence, 342 residues long: GTPase Obg (342 aa).

The Obg domain occupies 1-159 (MKFLDLCKVY…RTIWLRLKLI (159 aa)). The region spanning 160–327 (ADAGLLGLPN…VLRALWAEID (168 aa)) is the OBG-type G domain. Residues 166-173 (GLPNAGKS), 191-195 (FTTLV), 212-215 (DIPG), 279-282 (NKID), and 308-310 (SGV) each bind GTP. Residues S173 and T193 each contribute to the Mg(2+) site.

Belongs to the TRAFAC class OBG-HflX-like GTPase superfamily. OBG GTPase family. Monomer. Mg(2+) is required as a cofactor.

The protein resides in the cytoplasm. Functionally, an essential GTPase which binds GTP, GDP and possibly (p)ppGpp with moderate affinity, with high nucleotide exchange rates and a fairly low GTP hydrolysis rate. Plays a role in control of the cell cycle, stress response, ribosome biogenesis and in those bacteria that undergo differentiation, in morphogenesis control. In Cereibacter sphaeroides (strain ATCC 17029 / ATH 2.4.9) (Rhodobacter sphaeroides), this protein is GTPase Obg.